The primary structure comprises 501 residues: CUGBP Elav-like family member 1 (501 aa).

The segment at 2–196 is binds strongly to URE; the sequence is NGSLDHPDQP…DTQKDKEQKR (195 aa). 2 consecutive RRM domains span residues 16–99 and 108–188; these read IKMF…PADS and RKLF…FADT. Composition is skewed to low complexity over residues 274-298 and 312-323; these read PTGS…TPSG and SSPTSSTSSSVN. A disordered region spans residues 274–323; sequence PTGSSALTTSSSPLSVLTSSGTPSGQPAQSAWDAYKAGSSPTSSTSSSVN. Positions 397–501 are binds strongly to URE; the sequence is LLSQQNVSAA…KRSKNDSKPY (105 aa). Positions 416–494 constitute an RRM 3 domain; that stretch reads ANLFIYHLPQ…KRLKVQLKRS (79 aa).

It belongs to the CELF/BRUNOL family.

Its subcellular location is the nucleus. The protein localises to the cytoplasm. Functionally, RNA-binding protein implicated in the regulation of several post-transcriptional events. May be involved in mRNA translation activation and stability. Involved in the regulation of muscle-specific splicing of alpha actinin pre-mRNAs via the binding to the UR-repeat element (URE) at the branch point of the non-muscle (NM) exon. The sequence is that of CUGBP Elav-like family member 1 (celf1) from Danio rerio (Zebrafish).